Here is a 384-residue protein sequence, read N- to C-terminus: Urea transporter 1 (384 aa).

Glu39 is subject to Phosphoserine. 5 consecutive transmembrane segments (helical) span residues 61-81 (ISQVVFVSNPISGILILVGLL), 85-105 (PWWALCGCVGTVVSTLTALLL), 111-131 (AIAAGLQGYNATLVGILMAVF), 138-158 (FWWLIFPVSAMSMTCPVFSSA), and 168-188 (LPVFTLPFNMALSMYLSATGH). An N-linked (GlcNAc...) asparagine glycan is attached at Asn206. A run of 4 helical transmembrane segments spans residues 250 to 270 (LMCLHAAIGSLLGVIAGLSLA), 276 to 296 (IYFGLWGFNSSLACIAIGGMF), 305 to 325 (LLALACALFTAYFGACMAHLM), and 327 to 347 (VVHLPACTWSFCLATLLFLLL).

Belongs to the urea transporter family. Homotrimer; each subunit contains a pore through which urea permeates. Identified in a complex with STOM. Post-translationally, N-glycosylated in red blood cells, as well as in most non-erythroid tissues, except in the gastrocnemius muscle and in the gastrointestinal tract, including liver, colon and stomach. In terms of tissue distribution, expressed in brain, kidney, heart, liver, lung, skeletal muscle, spleen, testis, ureter and urinary bladder (at protein level). Along the gastrointestinal tract, detected in colon, jejunum and stomach (at protein level). In the kidney, expressed in some microvessels of the inner and outer medulla, but not all (at protein level). Not detected in the cortex (at protein level). Detected in the urothelium all along the urinary tract, including the papilla surface, the ureter, the bladder and the urethra (at protein level). In the brain, expressed at the border of the corpus callosum and striatum in astrocytic cellular processes surrounding blood microvessels (at protein level). Detected in erythrocytes (at protein level).

The protein localises to the cell membrane. The protein resides in the basolateral cell membrane. The enzyme catalyses urea(in) = urea(out). Functionally, mediates the transport of urea driven by a concentration gradient across the cell membranes of erythrocytes and the renal inner medullary collecting duct which is critical to the urinary concentrating mechanism. Facilitates water transport in erythrocytes. The polypeptide is Urea transporter 1 (Slc14a1) (Mus musculus (Mouse)).